Here is a 212-residue protein sequence, read N- to C-terminus: Small ribosomal subunit protein uS5 (212 aa).

The S5 DRBM domain occupies 48–111 (LDDEVLDINM…EVAKLNIIDV (64 aa)).

It belongs to the universal ribosomal protein uS5 family. Part of the 30S ribosomal subunit. Contacts protein S4.

With S4 and S12 plays an important role in translational accuracy. This Halobacterium salinarum (strain ATCC 700922 / JCM 11081 / NRC-1) (Halobacterium halobium) protein is Small ribosomal subunit protein uS5.